A 336-amino-acid polypeptide reads, in one-letter code: Immune-associated nucleotide-binding protein 13 (336 aa).

Residues 15-221 (KPERTLVLLG…YMADLSHELR (207 aa)) form the AIG1-type G domain. Residues 24–31 (GRTGNGKS) form a G1 region. GTP-binding positions include 24-32 (GRTGNGKSA) and Ser45. Residues 51 to 55 (FITKE) form a G2 region. The G3 stretch occupies residues 73-76 (DTPG). A G4 region spans residues 143–146 (TNED). The tract at residues 179-181 (DNS) is G5. A GTP-binding site is contributed by Asn180. Positions 265-328 (KEKISNQLKE…EKETASLRTE (64 aa)) form a coiled coil.

Belongs to the TRAFAC class TrmE-Era-EngA-EngB-Septin-like GTPase superfamily. AIG1/Toc34/Toc159-like paraseptin GTPase family. IAN subfamily. In terms of tissue distribution, expressed in pollen grains.

This Arabidopsis thaliana (Mouse-ear cress) protein is Immune-associated nucleotide-binding protein 13.